A 179-amino-acid polypeptide reads, in one-letter code: FAD-dependent monooxygenase nscC (179 aa).

The signal sequence occupies residues 1–21 (MGKQQETILIIGAGISGLATS). Glu35 and Ala46 together coordinate FAD. A glycan (N-linked (GlcNAc...) asparagine) is linked at Asn92. Arg119 serves as a coordination point for FAD. N-linked (GlcNAc...) asparagine glycosylation is present at Asn170.

Belongs to the paxM FAD-dependent monooxygenase family. FAD is required as a cofactor.

The protein operates within secondary metabolite biosynthesis. In terms of biological role, FAD-dependent monooxygenase; part of the gene cluster that mediates the biosynthesis of neosartoricin B, a prenylated anthracenone that probably exhibits T-cell antiproliferative activity, suggestive of a physiological role as an immunosuppressive agent. The non-reducing polyketide synthase nscA probably synthesizes and cyclizes the decaketide backbone. The hydrolase nscB then mediates the product release through hydrolysis followed by spontaneous decarboxylation. The prenyltransferase nscD catalyzes the addition of the dimethylallyl group to the aromatic C5. The FAD-dependent monooxygenase nscC is then responsible for the stereospecific hydroxylation at C2. Neosartoricin B can be converted into two additional compounds neosartoricins C and D. Neosartoricin C is a spirocyclic compound that is cyclized through the attack of C3 hydroxyl on C14, followed by dehydration. On the other hand, neosartoricin D is a further cyclized compound in which attack of C2 on C14 in neosartoricin C results in the formation of the acetal-containing dioxabicyclo-octanone ring. Both of these compounds are novel and possibly represent related metabolites of the gene cluster. The chain is FAD-dependent monooxygenase nscC from Trichophyton equinum (strain ATCC MYA-4606 / CBS 127.97) (Horse ringworm fungus).